The chain runs to 994 residues: Regulator of telomere elongation helicase 1 homolog (994 aa).

Residues 7 to 316 (AGIPVHFPFE…DDLMLLKEML (310 aa)) form the Helicase ATP-binding domain. 42 to 49 (SPTGTGKT) contributes to the ATP binding site. [4Fe-4S] cluster contacts are provided by Cys-146, Cys-164, Cys-173, and Cys-209. The DEAH box signature appears at 252–255 (DEAH). The tract at residues 861–887 (SSGLVKIHKRERSSPPGSSQSSSQTAK) is disordered. The span at 874 to 884 (SPPGSSQSSSQ) shows a compositional bias: low complexity.

This sequence belongs to the helicase family. RAD3/XPD subfamily.

It is found in the nucleus. The enzyme catalyses ATP + H2O = ADP + phosphate + H(+). Its function is as follows. A probable ATP-dependent DNA helicase implicated in DNA repair and the maintenance of genomic stability. Acts as an anti-recombinase to counteract toxic recombination and limit crossover during meiosis. Regulates meiotic recombination and crossover homeostasis by physically dissociating strand invasion events and thereby promotes noncrossover repair by meiotic synthesis dependent strand annealing (SDSA) as well as disassembly of D loop recombination intermediates. In Drosophila ananassae (Fruit fly), this protein is Regulator of telomere elongation helicase 1 homolog.